Here is an 85-residue protein sequence, read N- to C-terminus: Toxin Cll5c* (85 aa).

The first 17 residues, 1-17, serve as a signal peptide directing secretion; it reads MNSLLIITACLVLFVWA. An LCN-type CS-alpha/beta domain is found at 18 to 83; the sequence is KEGYLVNKST…TYPLPNKSCS (66 aa). 4 cysteine pairs are disulfide-bonded: Cys-29–Cys-82, Cys-33–Cys-58, Cys-42–Cys-63, and Cys-46–Cys-65. Residues 84-85 constitute a propeptide, removed by a carboxypeptidase; it reads KK.

It belongs to the long (4 C-C) scorpion toxin superfamily. Sodium channel inhibitor family. Beta subfamily. As to expression, expressed by the venom gland.

It localises to the secreted. In terms of biological role, beta toxins bind voltage-independently at site-4 of sodium channels (Nav) and shift the voltage of activation toward more negative potentials thereby affecting sodium channel activation and promoting spontaneous and repetitive firing. This is Toxin Cll5c* from Centruroides limpidus (Mexican scorpion).